The chain runs to 255 residues: Pre-miRNA 5'-monophosphate methyltransferase (255 aa).

S-adenosyl-L-methionine-binding positions include Arg-32, Asn-66, Asp-96, 121 to 122, and Met-150; that span reads DI. The Bin3-type SAM domain maps to 41-253; the sequence is LHKLFRKPAE…SLLLFKIQRH (213 aa).

Belongs to the methyltransferase superfamily.

It localises to the cytoplasm. The enzyme catalyses a 5'-end 5'-phospho-ribonucleoside-RNA + S-adenosyl-L-methionine = a 5'-end (5'-methylphospho)-ribonucleoside-RNA + S-adenosyl-L-homocysteine. It carries out the reaction a 5'-end 5'-phospho-ribonucleoside-RNA + 2 S-adenosyl-L-methionine = a 5'-end (5'-bismethylphospho)-ribonucleoside-RNA + 2 S-adenosyl-L-homocysteine. Functionally, O-methyltransferase that specifically monomethylates 5'-monophosphate of cytoplasmic histidyl tRNA (tRNA(His)), acting as a capping enzyme by protecting tRNA(His) from cleavage by DICER1. Also able, with less efficiently, to methylate the 5' monophosphate of a subset of pre-miRNAs, acting as a negative regulator of miRNA processing. The 5' monophosphate of pre-miRNAs is recognized by DICER1 and is required for pre-miRNAs processing: methylation at this position reduces the processing of pre-miRNAs by DICER1. Was also reported to mediate dimethylation of pre-miR-145; however dimethylation cannot be reproduced by another group which observes a monomethylation of pre-miR-145. This Xenopus laevis (African clawed frog) protein is Pre-miRNA 5'-monophosphate methyltransferase (bcdin3d).